A 236-amino-acid polypeptide reads, in one-letter code: uncharacterized protein (236 aa).

One can recognise a DPCK domain in the interval 3–208 (ILGLTGSIAT…PSYFFTLLCL (206 aa)). 8–15 (GSIATGKS) is a binding site for ATP. Ser82 and Ser86 each carry phosphoserine.

The protein belongs to the CoaE family.

It localises to the cytoplasm. This is an uncharacterized protein from Schizosaccharomyces pombe (strain 972 / ATCC 24843) (Fission yeast).